The sequence spans 777 residues: Spastin (777 aa).

Low complexity-rich tracts occupy residues 1–24 (MVRT…KSNN), 51–76 (HAHS…SSSP), and 85–94 (DDLTPTGSSP). Residues 1-103 (MVRTKSSSSS…PRSCNGRGHS (103 aa)) form a disordered region. Residues 1–116 (MVRTKSSSSS…KQNLYVVSFP (116 aa)) lie on the Cytoplasmic side of the membrane. Residues 1–215 (MVRTKSSSSS…RALQPLEMAT (215 aa)) are required for localization to punctate cytoplasmic foci. The segment at residues 117–137 (IIFLFNVLRSLIYQLFCIFRY) is an intramembrane region (helical). Residues 138–777 (LYGASTKVLY…WSQDYGDITI (640 aa)) lie on the Cytoplasmic side of the membrane. The interval 213 to 777 (MATNRPGGGY…WSQDYGDITI (565 aa)) is sufficient for interaction with microtubules and microtubule severing. In terms of domain architecture, MIT spans 238-313 (HRRAFEYISK…SMARDRLHFL (76 aa)). The interval 327 to 474 (LKEKQPAPKQ…SSGSGASTPM (148 aa)) is disordered. 3 stretches are compositionally biased toward polar residues: residues 372–389 (QNGT…TATG), 406–425 (PVTN…TTVG), and 444–460 (QFSS…RTPI). The segment covering 461–471 (NNNASSGSGAS) has biased composition (low complexity). Residues 462-474 (NNASSGSGASTPM) form a required for interaction with microtubules region. Residue 542-549 (GPPGNGKT) coordinates ATP.

The protein belongs to the AAA ATPase family. Spastin subfamily. Homohexamer. The homohexamer is stabilized by ATP-binding. The homohexamer may adopt a ring conformation through which microtubules pass prior to being severed. Interacts with microtubules. Interacts with atl; may be involved in microtubule dynamics.

The protein resides in the membrane. Its subcellular location is the cytoplasm. It localises to the cytoskeleton. The protein localises to the microtubule organizing center. It is found in the centrosome. The protein resides in the chromosome. Its subcellular location is the lipid droplet. The catalysed reaction is n ATP + n H2O + a microtubule = n ADP + n phosphate + (n+1) alpha/beta tubulin heterodimers.. In terms of biological role, ATP-dependent microtubule severing protein. Stimulates microtubule minus-end depolymerization and poleward microtubule flux in the mitotic spindle. Regulates microtubule stability in the neuromuscular junction synapse. Involved in lipid metabolism by regulating the size and distribution of lipid droplets. Involved in axon regeneration by regulating microtubule severing. This Drosophila willistoni (Fruit fly) protein is Spastin.